The following is a 712-amino-acid chain: MNPIVKSFQYGQHTVTLETGVMARQATAAVMVSMDDTCVFVTVVGKKEADHGRDFFPLTVNYQERTYAAGRIPGGFFRREGRPSEGETLISRLIDRPIRPLFPEGFLNEVQVVATVMSVNPAVSPDIVAMIGASAALAISGIPFGGPIGAARVGYMNGQYVLNPTTTELPQSDLDLVVAGTANAVLMVESEAAILSEEVMLGAVVFGHEQMQAVINAINEFAADVGTKPWNWTAPAVNEALKAKVAELATAELGEAYRITEKAVRYETIGAIKARVVEQVIASGVEEDAKKIGEEFHSLESRIVRGRVVRGEPRIDGRDPEMIRALSVATGVLPRAHGSALFTRGETQAMVVATLGTERDAQNIDELTGNRADRFMLHYNFPPYCVGETGMMGSPKRREIGHGRLAKRGVAAVMPSADEFPYVVRVVSEITESNGSSSMASVCGSSLALMDAGVPIKASVAGIAMGLVKEEEGFVVLSDILGDEDHLGDMDFKVAGTTEGVTALQMDIKIEGITKEIMEIALKQARGARLHILKVMDEAIQAPRAEISDFAPRIHTIKINPEKIKDVIGKGGSVIRALTEETGTNIELDDDGTVRIAAVDGDAAKEAIRRIEAITAEIEVNRIYEGKVVRLADFGAFVNILPGKDGLVHISQITDARVQNVADYLKIGDVVKVKVLEVDRQGRVRLSIKEANAPTEAAAEPAVAAVEEPAAE.

The Mg(2+) site is built by aspartate 485 and aspartate 491. The KH domain occupies 552–615; the sequence is PRIHTIKINP…EAIRRIEAIT (64 aa). Residues 621–689 enclose the S1 motif domain; it reads NRIYEGKVVR…RQGRVRLSIK (69 aa).

It belongs to the polyribonucleotide nucleotidyltransferase family. In terms of assembly, component of the RNA degradosome, which is a multiprotein complex involved in RNA processing and mRNA degradation. The cofactor is Mg(2+).

The protein localises to the cytoplasm. The enzyme catalyses RNA(n+1) + phosphate = RNA(n) + a ribonucleoside 5'-diphosphate. Involved in mRNA degradation. Catalyzes the phosphorolysis of single-stranded polyribonucleotides processively in the 3'- to 5'-direction. In Aeromonas hydrophila subsp. hydrophila (strain ATCC 7966 / DSM 30187 / BCRC 13018 / CCUG 14551 / JCM 1027 / KCTC 2358 / NCIMB 9240 / NCTC 8049), this protein is Polyribonucleotide nucleotidyltransferase.